Reading from the N-terminus, the 24-residue chain is MATRRFSCLLLSTSEIDLSVKRRI.

Belongs to the humanin family. Highly expressed in testis. Also expressed in kidney, heart, skeletal muscles and brain.

It is found in the secreted. The protein localises to the cytoplasm. Plays a role as a neuroprotective and antiapoptotic factor. This is Humanin-like 3 from Homo sapiens (Human).